A 499-amino-acid polypeptide reads, in one-letter code: Probable cytosol aminopeptidase (499 aa).

Mn(2+)-binding residues include Lys267 and Asp272. Lys279 is a catalytic residue. Residues Asp290, Asp349, and Glu351 each coordinate Mn(2+). The active site involves Arg353.

Belongs to the peptidase M17 family. The cofactor is Mn(2+).

It localises to the cytoplasm. The catalysed reaction is Release of an N-terminal amino acid, Xaa-|-Yaa-, in which Xaa is preferably Leu, but may be other amino acids including Pro although not Arg or Lys, and Yaa may be Pro. Amino acid amides and methyl esters are also readily hydrolyzed, but rates on arylamides are exceedingly low.. The enzyme catalyses Release of an N-terminal amino acid, preferentially leucine, but not glutamic or aspartic acids.. Its function is as follows. Presumably involved in the processing and regular turnover of intracellular proteins. Catalyzes the removal of unsubstituted N-terminal amino acids from various peptides. The polypeptide is Probable cytosol aminopeptidase (Alkaliphilus oremlandii (strain OhILAs) (Clostridium oremlandii (strain OhILAs))).